A 189-amino-acid polypeptide reads, in one-letter code: Movement protein (189 aa).

The protein belongs to the tombusvirus/aureusvirus movement protein p22 family.

It localises to the host membrane. In terms of biological role, transports viral genome to neighboring plant cells directly through plasmosdesmata, without any budding. The movement protein allows efficient cell to cell propagation, by bypassing the host cell wall barrier. The protein is Movement protein of Artichoke mottled crinkle virus (AMCV).